Here is a 158-residue protein sequence, read N- to C-terminus: Rhombotin-2 (158 aa).

LIM zinc-binding domains lie at 28–90 (LTCG…LFGQ) and 92–154 (GLCA…WTKL).

As to expression, expression becomes restricted to the ventral blood island (VBI) as the embryo develops. In late neurula and early tailbud embryos, also expressed in the dorsal lateral plate (DLP), the site of definitive hematopoiesis in the tadpole. Expression in the DLP diminishes during tailbud stages. Expressed in circulating blood cells of tadpoles. Also expressed in non-hematopoietic sites, including the tailbud region and the central nervous system of early neurula embryos.

It is found in the nucleus. Transcription factor that acts synergistically with tal1/scl and gata1 to specify embryonic dorsal mesoderm to a hematopoietic fate. Induces globin gene expression together with fgf. In Xenopus laevis (African clawed frog), this protein is Rhombotin-2.